We begin with the raw amino-acid sequence, 870 residues long: DNA-directed RNA polymerase subunit Rpo1N (870 aa).

Zn(2+) is bound by residues Cys60, Cys63, Cys70, His73, Cys100, Cys103, Cys146, and Cys149. Positions 451, 453, and 455 each coordinate Mg(2+).

This sequence belongs to the RNA polymerase beta' chain family. In terms of assembly, part of the RNA polymerase complex. Requires Mg(2+) as cofactor. Zn(2+) serves as cofactor.

Its subcellular location is the cytoplasm. The enzyme catalyses RNA(n) + a ribonucleoside 5'-triphosphate = RNA(n+1) + diphosphate. In terms of biological role, DNA-dependent RNA polymerase (RNAP) catalyzes the transcription of DNA into RNA using the four ribonucleoside triphosphates as substrates. Forms the clamp head domain. The sequence is that of DNA-directed RNA polymerase subunit Rpo1N from Methanothermobacter thermautotrophicus (strain ATCC 29096 / DSM 1053 / JCM 10044 / NBRC 100330 / Delta H) (Methanobacterium thermoautotrophicum).